The sequence spans 446 residues: Eukaryotic translation initiation factor 3 subunit E (446 aa).

The PCI domain maps to 256–425 (TDLFFSPAYI…GTVIMNHPPQ (170 aa)).

This sequence belongs to the eIF-3 subunit E family. Component of the eukaryotic translation initiation factor 3 (eIF-3) complex.

The protein localises to the cytoplasm. Its function is as follows. Component of the eukaryotic translation initiation factor 3 (eIF-3) complex, which is involved in protein synthesis of a specialized repertoire of mRNAs and, together with other initiation factors, stimulates binding of mRNA and methionyl-tRNAi to the 40S ribosome. The eIF-3 complex specifically targets and initiates translation of a subset of mRNAs involved in cell proliferation. This is Eukaryotic translation initiation factor 3 subunit E (int6) from Aspergillus terreus (strain NIH 2624 / FGSC A1156).